The primary structure comprises 105 residues: Small ribosomal subunit protein uS10 (105 aa).

The protein belongs to the universal ribosomal protein uS10 family. As to quaternary structure, part of the 30S ribosomal subunit.

Involved in the binding of tRNA to the ribosomes. This chain is Small ribosomal subunit protein uS10, found in Rickettsia massiliae (strain Mtu5).